We begin with the raw amino-acid sequence, 954 residues long: Serine/threonine-protein kinase ste20 (954 aa).

Low complexity predominate over residues 1-17 (MDGQLSLLSPTSSSSTS). 2 disordered regions span residues 1-165 (MDGQ…YDPL) and 203-316 (AAPA…RKKS). Basic residues predominate over residues 18–28 (HSRKRLTKKQR). 3 stretches are compositionally biased toward polar residues: residues 33–42 (NHRTSSSFNV), 57–75 (SASSLRQGPNCNQSPSLAR), and 100–121 (RSHTTRSQSANRPYNPTQTIPT). 3 stretches are compositionally biased toward low complexity: residues 127–136 (SPASSSQPQT), 143–153 (SAVASTTVTSS), and 203–214 (AAPAPTSTTTIA). The span at 224 to 234 (VAPPPPPPPPA) shows a compositional bias: pro residues. 2 stretches are compositionally biased toward low complexity: residues 245 to 256 (ARSSKPSKSPKS) and 265 to 277 (ASSFRHSASFSSA). The 14-residue stretch at 334 to 347 (ISAPENPVHVTHVG) folds into the CRIB domain. 2 disordered regions span residues 440–562 (PMIS…VQAS) and 587–655 (QAMA…SNAI). Pro residues-rich tracts occupy residues 463 to 475 (RAPPPVPKGPGPL) and 514 to 527 (MPPPGDEAPMPYLP). Positions 674–925 (YRGFTKIGQG…AHDLLRHDFM (252 aa)) constitute a Protein kinase domain. ATP contacts are provided by residues 680–688 (IGQGASGGV) and lysine 703. The active-site Proton acceptor is aspartate 793.

It belongs to the protein kinase superfamily. STE Ser/Thr protein kinase family. STE20 subfamily.

The protein localises to the cytoplasm. It is found in the nucleus. It catalyses the reaction L-seryl-[protein] + ATP = O-phospho-L-seryl-[protein] + ADP + H(+). It carries out the reaction L-threonyl-[protein] + ATP = O-phospho-L-threonyl-[protein] + ADP + H(+). Its function is as follows. MAP4K component of the MAPK pathway required for the mating pheromone response and the regulation of cell polarity and cell cycle. Phosphorylates histone H2B to form H2BS10ph. The protein is Serine/threonine-protein kinase ste20 (stk-4) of Neurospora crassa (strain ATCC 24698 / 74-OR23-1A / CBS 708.71 / DSM 1257 / FGSC 987).